We begin with the raw amino-acid sequence, 86 residues long: Dynein light chain 1, cytoplasmic (86 aa).

The protein belongs to the dynein light chain family. As to quaternary structure, homodimer. Cytoplasmic dynein consists of two catalytic heavy chains (HCs) and a number of non-catalytic subunits which present intermediate chains (ICs), light intermediate chains (LICs) and light chains (LCs). Component of the nuclear pore complex (NPC). NPC constitutes the exclusive means of nucleocytoplasmic transport. NPCs allow the passive diffusion of ions and small molecules and the active, nuclear transport receptor-mediated bidirectional transport of macromolecules such as proteins, RNAs, ribonucleoparticles (RNPs), and ribosomal subunits across the nuclear envelope. Due to its 8-fold rotational symmetry, all subunits are present with 8 copies or multiples thereof.

The protein localises to the cytoplasm. It is found in the cytoskeleton. The protein resides in the nucleus. Its subcellular location is the nuclear pore complex. Acts as one of several non-catalytic accessory components of the cytoplasmic dynein complex that are thought to be involved in linking dynein to cargos and to adapter proteins that regulate dynein function. Cytoplasmic dynein 1 acts as a motor for the intracellular retrograde motility of vesicles and organelles along microtubules. May play a role in changing or maintaining the spatial distribution of cytoskeletal structures. Also a component of the nuclear pore complex. In Candida glabrata (strain ATCC 2001 / BCRC 20586 / JCM 3761 / NBRC 0622 / NRRL Y-65 / CBS 138) (Yeast), this protein is Dynein light chain 1, cytoplasmic (DYN2).